We begin with the raw amino-acid sequence, 432 residues long: Glutamyl-tRNA reductase (432 aa).

Substrate is bound by residues 55–58 (TCNR), serine 114, 119–121 (ETQ), and glutamine 125. Cysteine 56 serves as the catalytic Nucleophile. 194 to 199 (GAGEMI) is an NADP(+) binding site.

This sequence belongs to the glutamyl-tRNA reductase family. As to quaternary structure, homodimer.

It catalyses the reaction (S)-4-amino-5-oxopentanoate + tRNA(Glu) + NADP(+) = L-glutamyl-tRNA(Glu) + NADPH + H(+). It participates in porphyrin-containing compound metabolism; protoporphyrin-IX biosynthesis; 5-aminolevulinate from L-glutamyl-tRNA(Glu): step 1/2. Functionally, catalyzes the NADPH-dependent reduction of glutamyl-tRNA(Glu) to glutamate 1-semialdehyde (GSA). The polypeptide is Glutamyl-tRNA reductase (Burkholderia ambifaria (strain MC40-6)).